We begin with the raw amino-acid sequence, 149 residues long: Small ribosomal subunit protein uS15 (149 aa).

Residues 1–14 are compositionally biased toward basic residues; that stretch reads MGRMHTHRHGKSHS. The tract at residues 1–20 is disordered; that stretch reads MGRMHTHRHGKSHSIRPATL.

The protein belongs to the universal ribosomal protein uS15 family. Part of the 30S ribosomal subunit.

The protein is Small ribosomal subunit protein uS15 of Nitrosopumilus maritimus (strain SCM1).